A 276-amino-acid chain; its full sequence is Large ribosomal subunit protein uL2 (276 aa).

The tract at residues 210–276 (GRNRHRGIRP…KLIISRRKGK (67 aa)) is disordered. A compositionally biased stretch (basic and acidic residues) spans 230-240 (DHPHGGGEGKK). Residues 255–276 (KGAKTRRKKASDKLIISRRKGK) show a composition bias toward basic residues.

It belongs to the universal ribosomal protein uL2 family. In terms of assembly, part of the 50S ribosomal subunit. Forms a bridge to the 30S subunit in the 70S ribosome.

Its function is as follows. One of the primary rRNA binding proteins. Required for association of the 30S and 50S subunits to form the 70S ribosome, for tRNA binding and peptide bond formation. It has been suggested to have peptidyltransferase activity; this is somewhat controversial. Makes several contacts with the 16S rRNA in the 70S ribosome. The sequence is that of Large ribosomal subunit protein uL2 from Campylobacter jejuni subsp. jejuni serotype O:6 (strain 81116 / NCTC 11828).